The sequence spans 155 residues: UPF0225 protein ECA2332 (155 aa).

The protein belongs to the UPF0225 family.

This is UPF0225 protein ECA2332 from Pectobacterium atrosepticum (strain SCRI 1043 / ATCC BAA-672) (Erwinia carotovora subsp. atroseptica).